Here is a 118-residue protein sequence, read N- to C-terminus: uncharacterized protein (118 aa).

This sequence belongs to the transposase IS3/IS150/IS904 family.

This is an uncharacterized protein from Haemophilus influenzae (strain ATCC 51907 / DSM 11121 / KW20 / Rd).